Reading from the N-terminus, the 804-residue chain is General transcription and DNA repair factor IIH helicase/translocase subunit XPB (804 aa).

Disordered regions lie at residues 1–61 and 220–255; these read MSLK…NSNE and QSSK…KSSS. Residues 14–36 are compositionally biased toward acidic residues; sequence PDEDLEEYSDYSDVDNYGEEDDD. Low complexity-rich tracts occupy residues 47–60 and 220–229; these read NNNK…TNSN and QSSKQKSSKP. The span at 236-255 shows a compositional bias: basic and acidic residues; that stretch reads EDKKDITNDSSKETAEKSSS. Residues 335 to 497 form the Helicase ATP-binding domain; it reads MFGNGRARSG…DLNFLIGPKM (163 aa). 348–355 serves as a coordination point for ATP; the sequence is LPCGAGKT. Residues 450–453 carry the DEVH box motif; the sequence is DEVH. The region spanning 551-705 is the Helicase C-terminal domain; it reads QACQFLIDYH…KVITNLKGME (155 aa). Disordered regions lie at residues 736-761 and 782-804; these read DDGE…SSGS and KQLK…TKRR. Residues 784–793 show a composition bias toward basic and acidic residues; it reads LKKDSKEHHA. Basic residues predominate over residues 794 to 804; it reads LFRKHLYTKRR.

It belongs to the helicase family. RAD25/XPB subfamily. Component of the 7-subunit TFIIH core complex composed of XPB/ptr8, XPD/rad15, ssl1, tfb1, tfb2, tfb4 and tfb5, which is active in NER. The core complex associates with the 3-subunit CTD-kinase module TFIIK composed of mcs2/cyclin H, mcs6/cdk7 and pmh1/tfb3 to form the 10-subunit holoenzyme (holo-TFIIH) active in transcription.

It localises to the nucleus. It catalyses the reaction Couples ATP hydrolysis with the unwinding of duplex DNA by translocating in the 3'-5' direction.. It carries out the reaction ATP + H2O = ADP + phosphate + H(+). In terms of biological role, probable ATP-dependent 3'-5' DNA helicase/translocase. Binds dsDNA rather than ssDNA, unzipping it in a translocase rather than classical helicase activity. Component of the general transcription and DNA repair factor IIH (TFIIH) core complex. When complexed to CDK-activating kinase (CAK), involved in RNA transcription by RNA polymerase II. Also involved in transcription-coupled nucleotide excision repair (NER) of damaged DNA. In NER, TFIIH acts by opening DNA around the lesion to allow the excision of the damaged oligonucleotide and its replacement by a new DNA fragment. The ATPase activity of XPB/ptr8, but not its helicase activity, is required for DNA opening. In transcription, TFIIH has an essential role in transcription initiation. When the pre-initiation complex (PIC) has been established, TFIIH is required for promoter opening and promoter escape. The ATP-dependent helicase activity of XPB/ptr8 is required for promoter escape but not for promoter opening. Plays a role in mRNA export. This Schizosaccharomyces pombe (strain 972 / ATCC 24843) (Fission yeast) protein is General transcription and DNA repair factor IIH helicase/translocase subunit XPB.